The chain runs to 546 residues: MASASSGPAAAGFSPLDSGVPAGTAASGIKRGTVSEGPYASLMPVKKIGHRSVDSSGETTYKKTTSSALKGAIQLGITHTVGSLSTKPERDVLMQDFYVVESIFFPSEGSNLTPAHHYNDFRFKTYAPVAFRYFRELFGIRPDDYLYSLCSEPLIELSNSGASGSLFYVSSDDEFIIKTVQHKEAEFLQKLLPGYYMNLNQNPRTLLPKFYGLYCVQAGGKNIRIVVMNNLLPRSVKMHMKYDLKGSTYKRRASQKEREKTLPTFKDLDFLQDIPDGLFLDADMYSALCKTLQRDCLVLQSFKIMDYSLLMSIHNMDHAQREPMNSETQYSIDTRRPAPQKALYSTAMESIQGEARRGGTVETEDHMGGIPARNNKGERLLLYIGIIDILQSYRFVKKLEHSWKALVHDGDTVSVHRPGFYAERFQRFMCNTVFKKIPLKPSPTKKFRSGPSFSRRSGPSGNSCTPSQPTASGEHKAQVTTKAEVEPDIHLGRPDVLPQTPPLEEISEGSPVPGPSFSPAVGQPLQILNLSSTLEKLDVAESELTH.

The PIPK domain occupies 65–433 (TSSALKGAIQ…RFQRFMCNTV (369 aa)). Lys87 participates in a covalent cross-link: Glycyl lysine isopeptide (Lys-Gly) (interchain with G-Cter in ubiquitin). Positions 441 to 522 (PSPTKKFRSG…PGPSFSPAVG (82 aa)) are disordered. Residues 449–461 (SGPSFSRRSGPSG) show a composition bias toward low complexity. Over residues 462–471 (NSCTPSQPTA) the composition is skewed to polar residues. Residues 473–493 (GEHKAQVTTKAEVEPDIHLGR) show a composition bias toward basic and acidic residues.

Interacts with RAC1. Interacts with TUT1. Forms a complex with CDH1/E-cadherin, CTNNB1/beta-catenin and CTNND1 at the plasma membrane upon calcium stimulation. Found in a ternary complex with IRS1 and DGKZ in the absence of insulin stimulation. Interacts with DGKZ. Interacts with PIP4K2C; the interaction inhibits PIP5K1A kinase activity.

It localises to the cell membrane. The protein resides in the cytoplasm. The protein localises to the nucleus. Its subcellular location is the nucleus speckle. It is found in the cell projection. It localises to the ruffle. The protein resides in the lamellipodium. The catalysed reaction is a 1,2-diacyl-sn-glycero-3-phospho-(1D-myo-inositol 4-phosphate) + ATP = a 1,2-diacyl-sn-glycero-3-phospho-(1D-myo-inositol-4,5-bisphosphate) + ADP + H(+). The enzyme catalyses 1-octadecanoyl-2-(5Z,8Z,11Z,14Z)-eicosatetraenoyl-sn-glycero-3-phospho-1D-myo-inositol 4-phosphate + ATP = 1-octadecanoyl-2-(5Z,8Z,11Z,14Z)-eicosatetraenoyl-sn-glycero-3-phospho-1D-myo-inositol 4,5-bisphosphate + ADP + H(+). It carries out the reaction 1,2-dihexadecanoyl-sn-glycero-3-phospho-(1D-myo-inositol-4-phosphate) + ATP = 1,2-dihexadecanoyl-sn-glycero-3-phospho-(1D-myo-inositol-4,5-bisphosphate) + ADP + H(+). It catalyses the reaction 1-octadecanoyl-2-(9Z)-octadecenoyl-sn-glycero-3-phospho-1D-myo-inositol 4-phosphate + ATP = 1-octadecanoyl-2-(9Z)-octadecenoyl-sn-glycero-3-phospho-1D-myo-inositol 4,5-bisphosphate + ADP + H(+). The catalysed reaction is 1-octadecanoyl-2-(9Z)-octadecenoyl-sn-glycero-3-phospho-1D-myo-inositol + ATP = 1-octadecanoyl-2-(9Z)-octadecenoyl-sn-glycero-3-phospho-1D-myo-inositol 5-phosphate + ADP + H(+). The enzyme catalyses 1-octadecanoyl-2-(9Z,12Z)-octadecadienoyl-sn-glycero-3-phospho-1D-myo-inositol + ATP = 1-octadecanoyl-2-(9Z,12Z)-octadecadienoyl-sn-glycero-3-phospho-1D-myo-inositol 5-phosphate + ADP + H(+). It carries out the reaction 1-octadecanoyl-2-(5Z,8Z,11Z,14Z-eicosatetraenoyl)-sn-glycero-3-phospho-(1D-myo-inositol) + ATP = 1-octadecanoyl-2-(5Z,8Z,11Z,14Z)-eicosatetraenoyl-sn-glycero-3-phospho-1D-myo-inositol 5-phosphate + ADP + H(+). It catalyses the reaction 1,2-di-(9Z,12Z)-octadecadienoyl-sn-glycero-3-phospho-1D-myo-inositol + ATP = 1,2-di(9Z,12Z)-octadecadienoyl-sn-glycero-3-phospho-1D-myo-inositol 5-phosphate + ADP + H(+). Catalyzes the phosphorylation of phosphatidylinositol 4-phosphate (PtdIns(4)P/PI4P) to form phosphatidylinositol 4,5-bisphosphate (PtdIns(4,5)P2/PIP2), a lipid second messenger that regulates several cellular processes such as signal transduction, vesicle trafficking, actin cytoskeleton dynamics, cell adhesion, and cell motility. PtdIns(4,5)P2 can directly act as a second messenger or can be utilized as a precursor to generate other second messengers: inositol 1,4,5-trisphosphate (IP3), diacylglycerol (DAG) or phosphatidylinositol-3,4,5-trisphosphate (PtdIns(3,4,5)P3/PIP3). PIP5K1A-mediated phosphorylation of PtdIns(4)P is the predominant pathway for PtdIns(4,5)P2 synthesis. Can also use phosphatidylinositol (PtdIns) as substrate in vitro. Together with PIP5K1C, is required for phagocytosis, both enzymes regulating different types of actin remodeling at sequential steps. Promotes particle ingestion by activating the WAS GTPase-binding protein that induces Arp2/3 dependent actin polymerization at the nascent phagocytic cup. Together with PIP5K1B, is required, after stimulation by G-protein coupled receptors, for the synthesis of IP3 that will induce stable platelet adhesion. Recruited to the plasma membrane by the E-cadherin/beta-catenin complex where it provides the substrate PtdIns(4,5)P2 for the production of PtdIns(3,4,5)P3, IP3 and DAG, that will mobilize internal calcium and drive keratinocyte differentiation. Positively regulates insulin-induced translocation of SLC2A4 to the cell membrane in adipocytes. Together with PIP5K1C has a role during embryogenesis. Independently of its catalytic activity, is required for membrane ruffling formation, actin organization and focal adhesion formation during directional cell migration by controlling integrin-induced translocation of the small GTPase RAC1 to the plasma membrane. Also functions in the nucleus where it acts as an activator of TUT1 adenylyltransferase activity in nuclear speckles, thereby regulating mRNA polyadenylation of a select set of mRNAs. The protein is Phosphatidylinositol 4-phosphate 5-kinase type-1 alpha of Rattus norvegicus (Rat).